The primary structure comprises 134 residues: D-ribose pyranase (134 aa).

Residue His-20 is the Proton donor of the active site. Substrate-binding positions include Asp-28, His-101, and 123 to 125; that span reads YCN.

Belongs to the RbsD / FucU family. RbsD subfamily. Homodecamer.

It localises to the cytoplasm. It catalyses the reaction beta-D-ribopyranose = beta-D-ribofuranose. Its pathway is carbohydrate metabolism; D-ribose degradation; D-ribose 5-phosphate from beta-D-ribopyranose: step 1/2. Functionally, catalyzes the interconversion of beta-pyran and beta-furan forms of D-ribose. The sequence is that of D-ribose pyranase from Pseudomonas fluorescens (strain ATCC BAA-477 / NRRL B-23932 / Pf-5).